A 391-amino-acid chain; its full sequence is Homocitrate synthase AksA (391 aa).

The 252-residue stretch at 20 to 271 folds into the Pyruvate carboxyltransferase domain; it reads ITIYDTTLRD…DLGFNIGVLY (252 aa).

Belongs to the alpha-IPM synthase/homocitrate synthase family.

It carries out the reaction acetyl-CoA + 2-oxoglutarate + H2O = (2R)-homocitrate + CoA + H(+). The enzyme catalyses 2-oxoadipate + acetyl-CoA + H2O = (R)-dihomocitrate + CoA + H(+). It catalyses the reaction 2-oxoheptanedioate + acetyl-CoA + H2O = (R)-trihomocitrate + CoA + H(+). It functions in the pathway organic acid metabolism; 2-oxosuberate biosynthesis. Catalyzes the condensation of alpha-ketoglutarate and acetyl-CoA to form (R)-homocitrate. Can also catalyze the condensation of alpha-ketoadipate with acetyl-CoA to form (R)-homo(2)citrate, and the condensation of alpha-ketopimelate with acetyl-CoA to form (R)-homo(3)citrate. These reactions are part of the biosynthesis pathway of coenzyme B and biotin. The chain is Homocitrate synthase AksA (aksA) from Methanothermobacter thermautotrophicus (strain ATCC 29096 / DSM 1053 / JCM 10044 / NBRC 100330 / Delta H) (Methanobacterium thermoautotrophicum).